The following is a 259-amino-acid chain: Peptide methionine sulfoxide reductase (259 aa).

Residues T66–P90 are disordered.

It belongs to the MsrA Met sulfoxide reductase family.

The enzyme catalyses L-methionyl-[protein] + [thioredoxin]-disulfide + H2O = L-methionyl-(S)-S-oxide-[protein] + [thioredoxin]-dithiol. It carries out the reaction [thioredoxin]-disulfide + L-methionine + H2O = L-methionine (S)-S-oxide + [thioredoxin]-dithiol. Its function is as follows. Has an important function as a repair enzyme for proteins that have been inactivated by oxidation. Catalyzes the reversible oxidation-reduction of methionine sulfoxide in proteins to methionine. This chain is Peptide methionine sulfoxide reductase, found in Lactuca sativa (Garden lettuce).